The sequence spans 318 residues: Putative S-adenosyl-L-methionine-dependent methyltransferase BCG_0781c (318 aa).

S-adenosyl-L-methionine contacts are provided by residues aspartate 135 and 164–165; that span reads DL.

This sequence belongs to the UPF0677 family.

In terms of biological role, exhibits S-adenosyl-L-methionine-dependent methyltransferase activity. This is Putative S-adenosyl-L-methionine-dependent methyltransferase BCG_0781c from Mycobacterium bovis (strain BCG / Pasteur 1173P2).